The chain runs to 305 residues: tRNA uridine(34) hydroxylase (305 aa).

Residues 124 to 219 form the Rhodanese domain; that stretch reads QDEETLVVDT…YLETIPKEES (96 aa). Cys179 serves as the catalytic Cysteine persulfide intermediate.

The protein belongs to the TrhO family.

It carries out the reaction uridine(34) in tRNA + AH2 + O2 = 5-hydroxyuridine(34) in tRNA + A + H2O. Catalyzes oxygen-dependent 5-hydroxyuridine (ho5U) modification at position 34 in tRNAs. The chain is tRNA uridine(34) hydroxylase from Bartonella bacilliformis (strain ATCC 35685 / KC583 / Herrer 020/F12,63).